The chain runs to 317 residues: Phosphatidylglycerol--prolipoprotein diacylglyceryl transferase 2 (317 aa).

The next 4 helical transmembrane spans lie at 19-39 (IPLRAYAFCIILGVFAAVWLG), 51-71 (GVIADVTLWAVPFGLVGGRLY), 93-113 (VWEGGLGIWGAIALGAVGAWI), and 120-140 (IPLPAFADAVAPGIVLAQAIG). Arginine 141 is a binding site for a 1,2-diacyl-sn-glycero-3-phospho-(1'-sn-glycerol). A run of 3 helical transmembrane segments spans residues 180-200 (PTFLYESLWNIGVAALILWAA), 211-230 (FALYVAAYTVGRFGTEYLRI), and 241-261 (LNNWTSVLVFLGAVACLVVSA). The tract at residues 275-317 (GAGADGRTDDPRPADASVGLASGPPGNSTPRRATESWNVRNRS) is disordered. The segment covering 299–317 (PGNSTPRRATESWNVRNRS) has biased composition (polar residues).

This sequence belongs to the Lgt family.

It localises to the cell membrane. The enzyme catalyses L-cysteinyl-[prolipoprotein] + a 1,2-diacyl-sn-glycero-3-phospho-(1'-sn-glycerol) = an S-1,2-diacyl-sn-glyceryl-L-cysteinyl-[prolipoprotein] + sn-glycerol 1-phosphate + H(+). It participates in protein modification; lipoprotein biosynthesis (diacylglyceryl transfer). Its function is as follows. Catalyzes the transfer of the diacylglyceryl group from phosphatidylglycerol to the sulfhydryl group of the N-terminal cysteine of a prolipoprotein, the first step in the formation of mature lipoproteins. The protein is Phosphatidylglycerol--prolipoprotein diacylglyceryl transferase 2 of Streptomyces coelicolor (strain ATCC BAA-471 / A3(2) / M145).